The chain runs to 414 residues: Seminal vesicle secretory protein 2 (414 aa).

Residues 1-22 (MKSSVFILSLFLLLERQAAVVG) form the signal peptide. At Q23 the chain carries Pyrrolidone carboxylic acid. A run of 13 repeats spans residues 108-120 (ESQI…VKSS), 127-139 (GSQL…VKSS), 140-152 (ESQL…VKAS), 153-165 (GSQL…VKAS), 166-178 (GSQL…MKSS), 179-191 (GSQV…MKSS), 192-204 (GSQV…MKAS), 205-217 (ESQI…RKSQ), 224-236 (YGQM…TKSL), 237-249 (ESQA…VKSQ), 257-269 (YGQR…ETQL), 275-287 (DAQL…QKSQ), and 299-311 (SAQL…QKSL). Residues 108-311 (ESQIKSFRQV…LKSFGQQKSL (204 aa)) are 13 X 13 AA tandem repeats. Disordered stretches follow at residues 170-228 (KSYG…GQMK), 240-294 (AKSF…SFSQ), and 306-369 (GQQK…FGQE). Residues 240-259 (AKSFGQVKSQSGQMKSSYGQ) show a composition bias toward polar residues. The span at 277-294 (QLKSYGQQKSQKQSSFSQ) shows a compositional bias: low complexity. Composition is skewed to polar residues over residues 306–321 (GQQK…TQQK) and 342–351 (SVQQKSTQQM). Residues 358-369 (SQFGQQRQFGQE) are compositionally biased toward low complexity.

Post-translationally, the repeating unit appears to be involved in the formation of the copulatory plug via a transglutaminase reaction cross-linking glutamine and lysine residues.

Its function is as follows. The rat seminal vesicle contains six major androgen-dependent secretory proteins referred to as SVS I-VI. The SVS I-III proteins appear to be components of the rat copulatory plug, with the SVS II protein being the major component. The sequence is that of Seminal vesicle secretory protein 2 (Svs2) from Rattus norvegicus (Rat).